The primary structure comprises 51 residues: MADDANKVWPSGLTTAEAEELQKGLVDGTRVFGVIAVLAHILAYAYTPWLH.

The Cytoplasmic portion of the chain corresponds to 2–23; that stretch reads ADDANKVWPSGLTTAEAEELQK. A helical membrane pass occupies residues 24-46; it reads GLVDGTRVFGVIAVLAHILAYAY. His-40 serves as a coordination point for a bacteriochlorophyll. Topologically, residues 47-51 are periplasmic; the sequence is TPWLH.

Belongs to the antenna complex beta subunit family. An alpha/beta heterodimer conjugated to 3 bacteriochlorophyll molecules. The core complex is formed by different alpha and beta chains, binding bacteriochlorophyll molecules, and arranged most probably in tetrameric structures disposed around the reaction center. The non-pigmented gamma chains may constitute additional components.

It localises to the cell inner membrane. Functionally, antenna complexes are light-harvesting systems, which transfer the excitation energy to the reaction centers. In Rubrivivax gelatinosus (Rhodocyclus gelatinosus), this protein is Light-harvesting protein B-800/850 beta chain (pucB).